We begin with the raw amino-acid sequence, 492 residues long: Dynein regulatory complex subunit 2 (492 aa).

Coiled coils occupy residues Leu-16–Val-95, Val-256–Ala-318, and Leu-373–Ser-401.

This sequence belongs to the DRC2 family. As to quaternary structure, component of the nexin-dynein regulatory complex (N-DRC).

The protein resides in the cytoplasm. It is found in the cytoskeleton. Its subcellular location is the flagellum basal body. The protein localises to the cell projection. It localises to the cilium. The protein resides in the flagellum. It is found in the flagellum axoneme. Its function is as follows. Component of the nexin-dynein regulatory complex (N-DRC), a key regulator of ciliary/flagellar motility which maintains the alignment and integrity of the distal axoneme and regulates microtubule sliding in motile axonemes. Plays a critical role in the assembly of N-DRC and also stabilizes the assembly of multiple inner dynein arms and radial spokes. Coassembles with DRC1 to form a central scaffold needed for assembly of the N-DRC and its attachment to the outer doublet microtubules. The sequence is that of Dynein regulatory complex subunit 2 (ccdc65) from Danio rerio (Zebrafish).